The sequence spans 455 residues: Argininosuccinate lyase (455 aa).

This sequence belongs to the lyase 1 family. Argininosuccinate lyase subfamily.

The protein resides in the cytoplasm. The catalysed reaction is 2-(N(omega)-L-arginino)succinate = fumarate + L-arginine. The protein operates within amino-acid biosynthesis; L-arginine biosynthesis; L-arginine from L-ornithine and carbamoyl phosphate: step 3/3. This chain is Argininosuccinate lyase, found in Shewanella sp. (strain MR-7).